Consider the following 282-residue polypeptide: Ermin (282 aa).

2 stretches are compositionally biased toward polar residues: residues 1 to 12 and 21 to 30; these read MTDTPVTLSGSE and NGQQPSSQTR. A disordered region spans residues 1–71; that stretch reads MTDTPVTLSG…NSKGNVLPRG (71 aa). Phosphoserine is present on residues Ser72, Ser212, Ser224, Ser228, and Ser231. Residues 212 to 224 are compositionally biased toward basic and acidic residues; the sequence is SPLKEESLAREDS. A disordered region spans residues 212-246; sequence SPLKEESLAREDSPLSSPSSQPGTPDEQLVLGKKG. Positions 225-234 are enriched in polar residues; the sequence is PLSSPSSQPG. A Phosphothreonine modification is found at Thr235. Residues 263–282 form a binds actin region; the sequence is KIRKGNTKQRIDEFESMMHL.

In terms of assembly, binds actin. Expressed specifically by the oligodendrocytes. Highest expression seen in the spinal cord followed by brainstem, cerebellum, thalamus, and hypothalamus. In the myelin sheath, found mainly in the abaxon and the lateral few terminal loops. Its apposition to the myelinated axon, through the latter, defines an axonal subregion, termed juxtanode, at the Ranvier node-paranode junction.

The protein localises to the cytoplasm. It localises to the cytoskeleton. Functionally, plays a role in cytoskeletal rearrangements during the late wrapping and/or compaction phases of myelinogenesis as well as in maintenance and stability of myelin sheath in the adult. May play an important role in late-stage oligodendroglia maturation, myelin/Ranvier node formation during CNS development, and in the maintenance and plasticity of related structures in the mature CNS. This Rattus norvegicus (Rat) protein is Ermin (Ermn).